A 430-amino-acid chain; its full sequence is Glutamate-1-semialdehyde 2,1-aminomutase (430 aa).

Position 267 is an N6-(pyridoxal phosphate)lysine (lysine 267).

It belongs to the class-III pyridoxal-phosphate-dependent aminotransferase family. HemL subfamily. Homodimer. Pyridoxal 5'-phosphate is required as a cofactor.

Its subcellular location is the cytoplasm. The catalysed reaction is (S)-4-amino-5-oxopentanoate = 5-aminolevulinate. The protein operates within porphyrin-containing compound metabolism; protoporphyrin-IX biosynthesis; 5-aminolevulinate from L-glutamyl-tRNA(Glu): step 2/2. The chain is Glutamate-1-semialdehyde 2,1-aminomutase from Cytophaga hutchinsonii (strain ATCC 33406 / DSM 1761 / CIP 103989 / NBRC 15051 / NCIMB 9469 / D465).